Reading from the N-terminus, the 311-residue chain is GTP cyclohydrolase FolE2 (311 aa).

The protein belongs to the GTP cyclohydrolase IV family.

It carries out the reaction GTP + H2O = 7,8-dihydroneopterin 3'-triphosphate + formate + H(+). Its pathway is cofactor biosynthesis; 7,8-dihydroneopterin triphosphate biosynthesis; 7,8-dihydroneopterin triphosphate from GTP: step 1/1. Functionally, converts GTP to 7,8-dihydroneopterin triphosphate. The chain is GTP cyclohydrolase FolE2 from Xanthomonas campestris pv. campestris (strain B100).